The sequence spans 423 residues: COUP transcription factor 1 (423 aa).

The disordered stretch occupies residues 1–81 (MAMVVSSWRD…QGPPGSGQSQ (81 aa)). Low complexity predominate over residues 39 to 67 (EQQQQAGSGAPHTPQTPGQPGAPATPGTA). The nuclear receptor DNA-binding region spans 83-158 (HIECVVCGDK…VGMRREAVQR (76 aa)). 2 NR C4-type zinc fingers span residues 86–106 (CVVC…CEGC) and 122–146 (CRAN…LKKC). Positions 184–410 (YLSGYISLLL…TLIRDMLLSG (227 aa)) constitute an NR LBD domain.

This sequence belongs to the nuclear hormone receptor family. NR2 subfamily. Binds DNA as dimer; homodimer and probable heterodimer with NR2F6. Interacts with GTF2B; this interaction is direct. Interacts with COPS2.

The protein localises to the nucleus. Coup (chicken ovalbumin upstream promoter) transcription factor binds to the ovalbumin promoter and, in conjunction with another protein (S300-II) stimulates initiation of transcription. Binds to both direct repeats and palindromes of the 5'-AGGTCA-3' motif. Represses transcriptional activity of LHCG. This Homo sapiens (Human) protein is COUP transcription factor 1 (NR2F1).